The primary structure comprises 209 residues: Claudin-like protein ZF-A9 (209 aa).

4 consecutive transmembrane segments (helical) span residues 8–28 (LGTT…AIPL), 81–101 (AILV…FAGG), 114–134 (ALVA…GLVP), and 159–179 (FGAA…GGGL). The tract at residues 187-209 (GRTSSRGRYTPASQNGRERSEYV) is disordered. Residues 188–201 (RTSSRGRYTPASQN) are compositionally biased toward polar residues.

It belongs to the claudin family.

It localises to the cell membrane. It is found in the cell junction. Its subcellular location is the tight junction. Functionally, component of tight junction (TJ) strands. This Danio rerio (Zebrafish) protein is Claudin-like protein ZF-A9 (cldng).